The following is a 276-amino-acid chain: Protein FAM151B (276 aa).

The protein belongs to the menorin family.

In terms of biological role, essential for survival of retinal photoreceptor cells. The polypeptide is Protein FAM151B (FAM151B) (Homo sapiens (Human)).